The following is a 500-amino-acid chain: Centrosomal protein of 57 kDa (500 aa).

A compositionally biased stretch (low complexity) spans 1–17; it reads MAAASVSAASGSHLSNS. 2 disordered regions span residues 1–34 and 43–62; these read MAAA…HSSS and KPFL…LAYP. Positions 18–34 are enriched in polar residues; sequence FAEPSRSNGSMVRHSSS. Phosphoserine occurs at positions 53 and 55. Residues 58-239 form a centrosome localization domain (CLD) region; it reads TLAYPESNSR…KAAELQTGLE (182 aa). Coiled-coil stretches lie at residues 63-242 and 392-492; these read ESNS…ETNR and ELKD…NSLQ. The interval 277–491 is mediates interaction with microtubules; sequence GAQPHYRLCL…KDMQSIQNSL (215 aa). Residues 434-450 show a composition bias toward basic and acidic residues; sequence KKELKATKKTLDEERNS. Positions 434-472 are disordered; that stretch reads KKELKATKKTLDEERNSSSRSGITGTTNKKDFMKLRPGE. Positions 451–460 are enriched in polar residues; that stretch reads SSRSGITGTT. The segment covering 461–471 has biased composition (basic and acidic residues); that stretch reads NKKDFMKLRPG.

This sequence belongs to the translokin family. Homodimer and homooligomer. Interacts with microtubules. Interacts with FGF2 and RAP80. Does not interact with FGF1 or FGF2 isoform 24 kDa. Ubiquitous.

Its subcellular location is the nucleus. The protein localises to the cytoplasm. The protein resides in the cytoskeleton. It is found in the microtubule organizing center. It localises to the centrosome. Centrosomal protein which may be required for microtubule attachment to centrosomes. May act by forming ring-like structures around microtubules. Mediates nuclear translocation and mitogenic activity of the internalized growth factor FGF2, but that of FGF1. In Homo sapiens (Human), this protein is Centrosomal protein of 57 kDa (CEP57).